The chain runs to 373 residues: Queuine tRNA-ribosyltransferase (373 aa).

Asp-90 acts as the Proton acceptor in catalysis. Residues 90–94 (DSGGF), Asp-144, Gln-193, and Gly-220 each bind substrate. The RNA binding stretch occupies residues 251–257 (GVGTPED). Asp-270 functions as the Nucleophile in the catalytic mechanism. The segment at 275–279 (TRNAR) is RNA binding; important for wobble base 34 recognition. Zn(2+)-binding residues include Cys-308, Cys-310, Cys-313, and His-339.

The protein belongs to the queuine tRNA-ribosyltransferase family. In terms of assembly, homodimer. Within each dimer, one monomer is responsible for RNA recognition and catalysis, while the other monomer binds to the replacement base PreQ1. It depends on Zn(2+) as a cofactor.

It catalyses the reaction 7-aminomethyl-7-carbaguanine + guanosine(34) in tRNA = 7-aminomethyl-7-carbaguanosine(34) in tRNA + guanine. It participates in tRNA modification; tRNA-queuosine biosynthesis. Functionally, catalyzes the base-exchange of a guanine (G) residue with the queuine precursor 7-aminomethyl-7-deazaguanine (PreQ1) at position 34 (anticodon wobble position) in tRNAs with GU(N) anticodons (tRNA-Asp, -Asn, -His and -Tyr). Catalysis occurs through a double-displacement mechanism. The nucleophile active site attacks the C1' of nucleotide 34 to detach the guanine base from the RNA, forming a covalent enzyme-RNA intermediate. The proton acceptor active site deprotonates the incoming PreQ1, allowing a nucleophilic attack on the C1' of the ribose to form the product. After dissociation, two additional enzymatic reactions on the tRNA convert PreQ1 to queuine (Q), resulting in the hypermodified nucleoside queuosine (7-(((4,5-cis-dihydroxy-2-cyclopenten-1-yl)amino)methyl)-7-deazaguanosine). The chain is Queuine tRNA-ribosyltransferase from Campylobacter lari (strain RM2100 / D67 / ATCC BAA-1060).